The chain runs to 219 residues: Segregation and condensation protein B (219 aa).

The disordered stretch occupies residues 193-219 (SLFAGGEEPSAEAADGGAGESTHGEEE). Residues 196-207 (AGGEEPSAEAAD) show a composition bias toward low complexity.

It belongs to the ScpB family. In terms of assembly, homodimer. Homodimerization may be required to stabilize the binding of ScpA to the Smc head domains. Component of a cohesin-like complex composed of ScpA, ScpB and the Smc homodimer, in which ScpA and ScpB bind to the head domain of Smc. The presence of the three proteins is required for the association of the complex with DNA.

The protein resides in the cytoplasm. Functionally, participates in chromosomal partition during cell division. May act via the formation of a condensin-like complex containing Smc and ScpA that pull DNA away from mid-cell into both cell halves. The chain is Segregation and condensation protein B from Symbiobacterium thermophilum (strain DSM 24528 / JCM 14929 / IAM 14863 / T).